We begin with the raw amino-acid sequence, 512 residues long: MEELKGYLKKSRSKQQHFLYPLLFQEYIYAFAHDHGLNVNGSFFYEPAEISGYDKKFSSLLVKRLITRMYQQNYLINSVNDSNQNRFVGHNKNLYSQMISEVFAVIVEIPFSLRLVSFLAEKKEIPKSQNLRTIHSIFPFFEDKLSHLNCVSDILIPYPVHLEILVQILQCRIQDVPSLHLLRFFFHEYHNWNNLITPKKSNYYGFSKENPRLFLFLYNSYVVECESIFVFLRKQSSYLRSTSSGTFLERAHFYEKIEQHLVVLCCNDFQKTLWLFKDPFMHYVRYQGKSILASKGTHLLMKKWKSYFVNFWQCHFHFWSQPCRIHINQFSKFSFYFLGYLSSVPINPSAVKSQMLENSFLVDTVTKKFETIVPIIPMIGALSKAKFCNVSGNPISKPVWADLSDSDIIDRFGRTCRNLSHYYSGSSKKQSLYRIKYILRLSCARTLARKHKSTVRAFLQRLGSEFLEEFFTEEEKALSLILPRISYPLDKLYRERIWYLDIIRINDLVNHL.

Belongs to the intron maturase 2 family. MatK subfamily.

It is found in the plastid. The protein resides in the chloroplast. Functionally, usually encoded in the trnK tRNA gene intron. Probably assists in splicing its own and other chloroplast group II introns. The sequence is that of Maturase K from Amorphophallus paeoniifolius (Whitespot giant arum).